Consider the following 326-residue polypeptide: Regulation of nuclear pre-mRNA domain-containing protein 1B (326 aa).

Ser-2 carries the post-translational modification N-acetylserine. Residues 2–133 form the CID domain; it reads SSFSESALEK…QLKLSMEDSK (132 aa). Residues 128-144 show a composition bias toward basic and acidic residues; the sequence is SMEDSKSPPPKAAEEKK. The disordered stretch occupies residues 128–148; sequence SMEDSKSPPPKAAEEKKSLKR. Phosphoserine is present on residues Ser-132 and Ser-134. Tyr-161 is modified (phosphotyrosine). Phosphoserine occurs at positions 166 and 299.

Belongs to the UPF0400 (RTT103) family. As to quaternary structure, homodimer. May form a heterodimer with RPRD1A. Associates with RPAP2. Associates with the RNA polymerase II complex. In terms of tissue distribution, widely expressed in the adult with highest levels in liver, colon, prostate and uterus and lowest levels in heart and kidney. Not detected in rectum.

Its subcellular location is the nucleus. Its function is as follows. Interacts with phosphorylated C-terminal heptapeptide repeat domain (CTD) of the largest RNA polymerase II subunit POLR2A, and participates in dephosphorylation of the CTD by RPAP2. Transcriptional regulator which enhances expression of CCND1. Promotes binding of RNA polymerase II to the CCDN1 promoter and to the termination region before the poly-A site but decreases its binding after the poly-A site. Prevents RNA polymerase II from reading through the 3' end termination site and may allow it to be recruited back to the promoter through promotion of the formation of a chromatin loop. Also enhances the transcription of a number of other cell cycle-related genes including CDK2, CDK4, CDK6 and cyclin-E but not CDKN1A, CDKN1B or cyclin-A. Promotes cell proliferation. In Mus musculus (Mouse), this protein is Regulation of nuclear pre-mRNA domain-containing protein 1B (Rprd1b).